We begin with the raw amino-acid sequence, 562 residues long: Dihydroxy-acid dehydratase 2 (562 aa).

Residue Cys50 coordinates [2Fe-2S] cluster. Asp82 is a binding site for Mg(2+). Residue Cys123 participates in [2Fe-2S] cluster binding. 3 residues coordinate Mg(2+): Asp124, Lys125, and Glu447. Lys125 carries the N6-carboxylysine modification. Ser473 acts as the Proton acceptor in catalysis.

This sequence belongs to the IlvD/Edd family. In terms of assembly, homodimer. [2Fe-2S] cluster serves as cofactor. Mg(2+) is required as a cofactor.

It carries out the reaction (2R)-2,3-dihydroxy-3-methylbutanoate = 3-methyl-2-oxobutanoate + H2O. It catalyses the reaction (2R,3R)-2,3-dihydroxy-3-methylpentanoate = (S)-3-methyl-2-oxopentanoate + H2O. The protein operates within amino-acid biosynthesis; L-isoleucine biosynthesis; L-isoleucine from 2-oxobutanoate: step 3/4. Its pathway is amino-acid biosynthesis; L-valine biosynthesis; L-valine from pyruvate: step 3/4. Functions in the biosynthesis of branched-chain amino acids. Catalyzes the dehydration of (2R,3R)-2,3-dihydroxy-3-methylpentanoate (2,3-dihydroxy-3-methylvalerate) into 2-oxo-3-methylpentanoate (2-oxo-3-methylvalerate) and of (2R)-2,3-dihydroxy-3-methylbutanoate (2,3-dihydroxyisovalerate) into 2-oxo-3-methylbutanoate (2-oxoisovalerate), the penultimate precursor to L-isoleucine and L-valine, respectively. The polypeptide is Dihydroxy-acid dehydratase 2 (Bordetella pertussis (strain Tohama I / ATCC BAA-589 / NCTC 13251)).